A 388-amino-acid chain; its full sequence is Succinate--CoA ligase [ADP-forming] subunit beta (388 aa).

The ATP-grasp domain maps to 9-244; sequence KSLFAEYGLP…PSQDDAREAH (236 aa). ATP is bound by residues Lys46, 53-55, Glu99, Thr102, and Glu107; that span reads GRG. Positions 199 and 213 each coordinate Mg(2+). Substrate contacts are provided by residues Asn264 and 321–323; that span reads GIV.

It belongs to the succinate/malate CoA ligase beta subunit family. Heterotetramer of two alpha and two beta subunits. It depends on Mg(2+) as a cofactor.

It catalyses the reaction succinate + ATP + CoA = succinyl-CoA + ADP + phosphate. The catalysed reaction is GTP + succinate + CoA = succinyl-CoA + GDP + phosphate. The protein operates within carbohydrate metabolism; tricarboxylic acid cycle; succinate from succinyl-CoA (ligase route): step 1/1. In terms of biological role, succinyl-CoA synthetase functions in the citric acid cycle (TCA), coupling the hydrolysis of succinyl-CoA to the synthesis of either ATP or GTP and thus represents the only step of substrate-level phosphorylation in the TCA. The beta subunit provides nucleotide specificity of the enzyme and binds the substrate succinate, while the binding sites for coenzyme A and phosphate are found in the alpha subunit. The polypeptide is Succinate--CoA ligase [ADP-forming] subunit beta (Shewanella putrefaciens (strain CN-32 / ATCC BAA-453)).